A 193-amino-acid polypeptide reads, in one-letter code: Interleukin-23 subunit alpha (193 aa).

Positions 1–22 (MLGSRAVMLMLLLLLLPWTSQG) are cleaved as a signal peptide.

The protein belongs to the IL-6 superfamily. As to quaternary structure, heterodimer with IL12B; disulfide-linked. The heterodimer is known as interleukin IL-23. Interacts with IL23R; this interaction enables recruitment of IL12RB1.

The protein resides in the secreted. In terms of biological role, associates with IL12B to form the pro-inflammatory cytokine IL-23 that plays different roles in innate and adaptive immunity. Released by antigen-presenting cells such as dendritic cells or macrophages, binds to a heterodimeric receptor complex composed of IL12RB1 and IL23R to activate JAK2 and TYK2 which then phosphorylate the receptor to form a docking site leading to the phosphorylation of STAT3 and STAT4. This process leads to activation of several pathways including p38 MAPK or NF-kappa-B and promotes the production of pro-inflammatory cytokines such as interleukin-17A/IL17A. In turn, participates in the early and effective intracellular bacterial clearance. Promotes the expansion and survival of T-helper 17 cells, a CD4-positive helper T-cell subset that produces IL-17, as well as other IL-17-producing cells. This is Interleukin-23 subunit alpha (IL23A) from Sus scrofa (Pig).